We begin with the raw amino-acid sequence, 65 residues long: Putative potassium channel toxin Ts21 (65 aa).

Positions 1–25 (MNKVYLVAILVLSVLLVANVSPIEG) are cleaved as a signal peptide. Cystine bridges form between Cys-31–Cys-53, Cys-38–Cys-61, and Cys-42–Cys-63.

This sequence belongs to the short scorpion toxin superfamily. Potassium channel inhibitor family. Alpha-KTx 11 subfamily. In terms of tissue distribution, expressed by the venom gland.

The protein resides in the secreted. Functionally, this recombinant toxin inhibits the mammalian voltage-gated potassium channels Kv1.3/KCNA3 in vitro with an IC(50) of 26.40 nM. This chain is Putative potassium channel toxin Ts21, found in Tityus serrulatus (Brazilian scorpion).